The following is a 449-amino-acid chain: Probable glucuronosyltransferase 47 A (449 aa).

At 1–31 (MEHPLECADSCSLAMSWFCNKKCRGWGLMKR) the chain is on the cytoplasmic side. The chain crosses the membrane as a helical; Signal-anchor for type II membrane protein span at residues 32–52 (TVVASGLRSVVLLLLFIYFVQ). The Lumenal portion of the chain corresponds to 53–449 (DVTAEMGHQR…GDLYPWGNDL (397 aa)). Asn-172 and Asn-433 each carry an N-linked (GlcNAc...) asparagine glycan.

It belongs to the glycosyltransferase 47 family. In terms of tissue distribution, mostly expressed in newly formed or expanding tissues.

The protein resides in the golgi apparatus membrane. Functionally, involved in the synthesis of glucuronoxylan hemicellulose in secondary cell walls. The polypeptide is Probable glucuronosyltransferase 47 A (Physcomitrium patens (Spreading-leaved earth moss)).